Reading from the N-terminus, the 182-residue chain is ATP-dependent protease subunit HslV (182 aa).

T12 is an active-site residue. The Na(+) site is built by A167, C170, and T173.

The protein belongs to the peptidase T1B family. HslV subfamily. In terms of assembly, a double ring-shaped homohexamer of HslV is capped on each side by a ring-shaped HslU homohexamer. The assembly of the HslU/HslV complex is dependent on binding of ATP.

It localises to the cytoplasm. It catalyses the reaction ATP-dependent cleavage of peptide bonds with broad specificity.. Allosterically activated by HslU binding. Functionally, protease subunit of a proteasome-like degradation complex believed to be a general protein degrading machinery. This is ATP-dependent protease subunit HslV from Chlorobium luteolum (strain DSM 273 / BCRC 81028 / 2530) (Pelodictyon luteolum).